We begin with the raw amino-acid sequence, 243 residues long: RNA-binding protein with serine-rich domain 1 homolog (243 aa).

The interval 48–92 (SSTRQFNNTRSPSGRSASRSSNFSHRSSSRDSFSSNRSYSSSLSR) is disordered. Residues 57-92 (RSPSGRSASRSSNFSHRSSSRDSFSSNRSYSSSLSR) show a composition bias toward low complexity. The 79-residue stretch at 99–177 (RTILVENLTR…EELFVSIKRF (79 aa)) folds into the RRM domain. The interval 189–243 (YENSYRPSRSQNNSHYNDKSFHRSRYSRARSRSPGSNISEYSDQSPPYHSYRHRP) is disordered. Residues 193–203 (YRPSRSQNNSH) are compositionally biased toward polar residues. A compositionally biased stretch (basic residues) spans 210–219 (HRSRYSRARS). The segment covering 222-235 (PGSNISEYSDQSPP) has biased composition (polar residues).

Belongs to the splicing factor SR family. Component of the active spliceosome.

The protein localises to the cytoplasm. It localises to the nucleus. In terms of biological role, putative component of the spliceosome which enhances the formation of the ATP-dependent A complex of the spliceosome. may participate in mRNA 3'-end cleavage. Also mediates increase of mRNA abundance and translational efficiency. The chain is RNA-binding protein with serine-rich domain 1 homolog from Schizosaccharomyces pombe (strain 972 / ATCC 24843) (Fission yeast).